A 353-amino-acid polypeptide reads, in one-letter code: N-terminal EF-hand calcium-binding protein 3 (353 aa).

Residues 27–62 form the EF-hand domain; that stretch reads AGHALFQDVFRRADKNDDGKLSFEEFQNYFADGVLS. Ca(2+) is bound by residues Asp40, Asn42, Asp44, Lys46, and Glu51. Positions 172–181 are required for interaction with APBA3; the sequence is IKAQSRPCGS. Positions 193 to 203 are enriched in low complexity; sequence SWSPSWSPGSS. The segment at 193–213 is disordered; that stretch reads SWSPSWSPGSSDTGRSSEAEQ. A compositionally biased stretch (polar residues) spans 204–213; sequence DTGRSSEAEQ. Positions 253–342 constitute an ABM domain; the sequence is LVAQRQVQVA…QAPDTLTTVF (90 aa).

In terms of assembly, interacts with the N-terminal domain of APBA2. Interacts with NEK2. Interacts with APBA3; APBA3 seems to mediate the interaction between NECAB3 and HIF1AN. In terms of processing, phosphorylated by NEK2. Widely expressed, with highest levels in the brain.

The protein localises to the golgi apparatus. Functionally, inhibits the interaction of APBA2 with amyloid-beta precursor protein (APP), and hence allows formation of amyloid-beta. May enhance the activity of HIF1A and thus promote glycolysis under normoxic conditions; the function requires its ABM domain and may implicate the stabilization of the interaction between HIF1AN and APBA3. The polypeptide is N-terminal EF-hand calcium-binding protein 3 (Necab3) (Mus musculus (Mouse)).